Reading from the N-terminus, the 1199-residue chain is DNA-directed RNA polymerase subunit beta' (1199 aa).

Zn(2+) is bound by residues cysteine 60, cysteine 62, cysteine 75, and cysteine 78. Residues aspartate 449, aspartate 451, and aspartate 453 each contribute to the Mg(2+) site. Residues cysteine 818, cysteine 892, cysteine 899, and cysteine 902 each contribute to the Zn(2+) site.

It belongs to the RNA polymerase beta' chain family. In terms of assembly, RNAP is composed of a core of 2 alpha, a beta and a beta' subunit. The core is associated with a delta subunit, and at least one of epsilon or omega. When a sigma factor is associated with the core the holoenzyme is formed, which can initiate transcription. Mg(2+) is required as a cofactor. The cofactor is Zn(2+).

The enzyme catalyses RNA(n) + a ribonucleoside 5'-triphosphate = RNA(n+1) + diphosphate. Its function is as follows. DNA-dependent RNA polymerase catalyzes the transcription of DNA into RNA using the four ribonucleoside triphosphates as substrates. The chain is DNA-directed RNA polymerase subunit beta' from Bacillus subtilis (strain 168).